Reading from the N-terminus, the 155-residue chain is Small ribosomal subunit protein bS6 (155 aa).

Residues 94 to 155 (EKHEEGPSAM…RPRRPREDRV (62 aa)) form a disordered region.

The protein belongs to the bacterial ribosomal protein bS6 family.

In terms of biological role, binds together with bS18 to 16S ribosomal RNA. This Rhizobium leguminosarum bv. trifolii (strain WSM2304) protein is Small ribosomal subunit protein bS6.